Reading from the N-terminus, the 368-residue chain is 1-deoxy-D-xylulose 5-phosphate reductoisomerase (368 aa).

NADPH contacts are provided by threonine 7, glycine 8, serine 9, isoleucine 10, glycine 31, lysine 32, asparagine 33, and asparagine 113. A 1-deoxy-D-xylulose 5-phosphate-binding site is contributed by lysine 114. Glutamate 115 is a binding site for NADPH. Aspartate 133 is a binding site for Mn(2+). Positions 134, 135, 158, and 181 each coordinate 1-deoxy-D-xylulose 5-phosphate. Position 135 (glutamate 135) interacts with Mn(2+). Glycine 187 is a binding site for NADPH. Residues serine 194, asparagine 199, lysine 200, and glutamate 203 each contribute to the 1-deoxy-D-xylulose 5-phosphate site. Glutamate 203 contributes to the Mn(2+) binding site.

The protein belongs to the DXR family. It depends on Mg(2+) as a cofactor. Mn(2+) is required as a cofactor.

It carries out the reaction 2-C-methyl-D-erythritol 4-phosphate + NADP(+) = 1-deoxy-D-xylulose 5-phosphate + NADPH + H(+). It participates in isoprenoid biosynthesis; isopentenyl diphosphate biosynthesis via DXP pathway; isopentenyl diphosphate from 1-deoxy-D-xylulose 5-phosphate: step 1/6. Functionally, catalyzes the NADPH-dependent rearrangement and reduction of 1-deoxy-D-xylulose-5-phosphate (DXP) to 2-C-methyl-D-erythritol 4-phosphate (MEP). In Helicobacter pylori (strain J99 / ATCC 700824) (Campylobacter pylori J99), this protein is 1-deoxy-D-xylulose 5-phosphate reductoisomerase.